The sequence spans 712 residues: MKSLIIAEKPSVGRDIANTLNINEKRNGYFENNKYIVTWALGHLVTNATPEQYDASYKEWKLNDLPIIPNKMKTIVISKTRKQFSTVQSLINNNKVKDIIIATDAGREGELVARLILDKAHNKKPTKRLWISSVTNKAIKEGFNKLQDGRKFNNLYHAALARSEADWIVGINATRALTTKYDAQLSLGRVQTPTIQLVQMRQNEINHFKPQTYYTMKLNAAGLTFHCTKPQSHPDKTVLESIKKAIDGQSGHIASISKTHKKAYPQQLYNLTDLQQDAYKRFHLGPKETLNTLQTLYERHKLVTYPRTDSNYLTDDMVDTLKDRLKAIMATSLKDMAKAQMSQTFSSKQRFVNNNKVSDHHAIIPTEVRPDINQLSQRESKIYMMIAQRYLENLMPPHEYEAIAIELKVGQHTFTFKDKVTTKLGFKAIYENKESINTQIDQLQKGTKLNVTKILIEEHETTAPPYFNEGSLLKAMESPQKFFDLSDKKHDKTLKDTGGIGTVATRADIIEKLFNMNAIEARDGKIKVTSKGKQILELAPQKLTSPLLTAEWEEKLLLIEQGKYNASQFISEMKAFTNQVVNEIKESEQNYKHDNLTTTECPTCGKFMIKVKTKNGQMLVCQDPQCKTKKNVQRKTNARCPNCHKKMTLFGRGKDAVYRCVCGHTETQAQMDKRHKNKKSDKVNKKDLKKYMNNDEGIENNPFQDALKGLKF.

The Toprim domain occupies 2–135; it reads KSLIIAEKPS…TKRLWISSVT (134 aa). 2 residues coordinate Mg(2+): E8 and D104. In terms of domain architecture, Topo IA-type catalytic spans 152 to 581; the sequence is FNNLYHAALA…EMKAFTNQVV (430 aa). The interval 186–191 is interaction with DNA; that stretch reads SLGRVQ. The O-(5'-phospho-DNA)-tyrosine intermediate role is filled by Y305.

The protein belongs to the type IA topoisomerase family. Requires Mg(2+) as cofactor.

It carries out the reaction ATP-independent breakage of single-stranded DNA, followed by passage and rejoining.. Releases the supercoiling and torsional tension of DNA, which is introduced during the DNA replication and transcription, by transiently cleaving and rejoining one strand of the DNA duplex. Introduces a single-strand break via transesterification at a target site in duplex DNA. The scissile phosphodiester is attacked by the catalytic tyrosine of the enzyme, resulting in the formation of a DNA-(5'-phosphotyrosyl)-enzyme intermediate and the expulsion of a 3'-OH DNA strand. The free DNA strand then undergoes passage around the unbroken strand, thus removing DNA supercoils. Finally, in the religation step, the DNA 3'-OH attacks the covalent intermediate to expel the active-site tyrosine and restore the DNA phosphodiester backbone. This is DNA topoisomerase 3 from Staphylococcus saprophyticus subsp. saprophyticus (strain ATCC 15305 / DSM 20229 / NCIMB 8711 / NCTC 7292 / S-41).